Here is a 361-residue protein sequence, read N- to C-terminus: Chorismate synthase (361 aa).

Residues 37 to 59 (TEADLQHDLDRRRPGTSRYTTQR) are disordered. Basic and acidic residues predominate over residues 40-49 (DLQHDLDRRR). Residues R48 and R54 each coordinate NADP(+). FMN contacts are provided by residues 125-127 (RSS), 238-239 (NA), G278, 293-297 (KPTSS), and R319.

It belongs to the chorismate synthase family. Homotetramer. It depends on FMNH2 as a cofactor.

It catalyses the reaction 5-O-(1-carboxyvinyl)-3-phosphoshikimate = chorismate + phosphate. Its pathway is metabolic intermediate biosynthesis; chorismate biosynthesis; chorismate from D-erythrose 4-phosphate and phosphoenolpyruvate: step 7/7. Functionally, catalyzes the anti-1,4-elimination of the C-3 phosphate and the C-6 proR hydrogen from 5-enolpyruvylshikimate-3-phosphate (EPSP) to yield chorismate, which is the branch point compound that serves as the starting substrate for the three terminal pathways of aromatic amino acid biosynthesis. This reaction introduces a second double bond into the aromatic ring system. This chain is Chorismate synthase, found in Serratia proteamaculans (strain 568).